The primary structure comprises 404 residues: uncharacterized protein (404 aa).

This is an uncharacterized protein from Mycoplasma genitalium (strain ATCC 33530 / DSM 19775 / NCTC 10195 / G37) (Mycoplasmoides genitalium).